Here is a 335-residue protein sequence, read N- to C-terminus: tRNA N6-adenosine threonylcarbamoyltransferase (335 aa).

2 residues coordinate Fe cation: H111 and H115. Substrate is bound by residues 133–137 (LISGG), D166, G179, and N276. Fe cation is bound at residue D301.

This sequence belongs to the KAE1 / TsaD family. Fe(2+) serves as cofactor.

It localises to the cytoplasm. It carries out the reaction L-threonylcarbamoyladenylate + adenosine(37) in tRNA = N(6)-L-threonylcarbamoyladenosine(37) in tRNA + AMP + H(+). Required for the formation of a threonylcarbamoyl group on adenosine at position 37 (t(6)A37) in tRNAs that read codons beginning with adenine. Is involved in the transfer of the threonylcarbamoyl moiety of threonylcarbamoyl-AMP (TC-AMP) to the N6 group of A37, together with TsaE and TsaB. TsaD likely plays a direct catalytic role in this reaction. The chain is tRNA N6-adenosine threonylcarbamoyltransferase from Wolbachia pipientis wMel.